Consider the following 420-residue polypeptide: Trichothecene biosynthesis transcription regulator TRI10 (420 aa).

It belongs to the TRI10 transcription regulator family.

The protein resides in the nucleus. In terms of biological role, transcriptional activator of all of the trichothecene biosynthesis genes. Acts upstream of the cluster-encoded transcription factor TRI6 and is necessary for full expression of both the other trichothecene genes and the genes for the primary metabolic pathway that precedes the trichothecene biosynthetic pathway. In Fusarium sporotrichioides, this protein is Trichothecene biosynthesis transcription regulator TRI10.